We begin with the raw amino-acid sequence, 1649 residues long: Cortactin-binding protein 2 (1649 aa).

Residues 1–27 (MATDSASCEPDLSRAPGDAEGATAEAA) form a disordered region. Residues 15–25 (APGDAEGATAE) show a composition bias toward low complexity. A coiled-coil region spans residues 118 to 275 (RKMQERMSAQ…EQMKKGNDGK (158 aa)). Disordered stretches follow at residues 322–439 (PLSV…PGLN), 451–476 (GNAN…PTSR), and 492–604 (ALSR…LPPK). Residues 330 to 342 (STGSPLVSTNTKG) show a composition bias toward polar residues. The segment covering 395–416 (STPSTPSGTAPAAAQTLGAAPQ) has biased composition (low complexity). A compositionally biased stretch (polar residues) spans 492-503 (ALSRFTSPQAGA). Arg-495 carries the post-translational modification Asymmetric dimethylarginine. ANK repeat units lie at residues 699-729 (GRPT…DINY), 733-762 (DSHS…RVDA), 766-795 (NGFT…NINH), 799-828 (GGQT…DRSI), 832-861 (DGWT…PAPG), and 901-931 (EGWT…EPER). Positions 1438–1471 (SAAWRKVNTSPRKKPGHFSSPMWNKPDLKHEGMR) are disordered. Residue Ser-1510 is modified to Phosphoserine. Residues 1527-1649 (KSESDISKIA…KHEHVEKRNK (123 aa)) form a disordered region. Basic and acidic residues predominate over residues 1528–1546 (SESDISKIADSREDLRTFD). Polar residues-rich tracts occupy residues 1547–1557 (SSRTNPVTSAP), 1571–1584 (PLSS…SNSK), and 1621–1630 (NTRQLEINNN). Basic and acidic residues predominate over residues 1631–1649 (SKEENWNVDKHEHVEKRNK).

Interacts with CTTN/cortactin SH3 domain. Interacts with STRN, STRN4/zinedin and MOB4/phocein; this interactions mediate the association with the STRIPAK core complex and may regulate dendritic spine distribution of the STRIPAK complex in hippocampal neurons. Activation of glutamate receptors weakens the interaction with STRN and STRN4.

It localises to the cytoplasm. The protein localises to the cell cortex. It is found in the cell projection. The protein resides in the dendritic spine. Functionally, regulates the dendritic spine distribution of CTTN/cortactin in hippocampal neurons, and thus controls dendritic spinogenesis and dendritic spine maintenance. Associates with the striatin-interacting phosphatase and kinase (STRIPAK) core complex to regulate dendritic spine distribution of the STRIPAK complex in hippocampal neurons. The polypeptide is Cortactin-binding protein 2 (Cttnbp2) (Rattus norvegicus (Rat)).